The sequence spans 860 residues: MTTTSLGADAAHTHAMVPSAIPPEGSDAAGPDDTLMQQMQAACAQACRAIAPAWPLDRAIAVNPHWGRVDMPVRRVAARMAVLGGIQVFPTRRSQQQAWVAGRITPADLADALAQLPAARAAGLTEAKCVEALRRHELPPRLPLLIDVLDNDPQRHTRLSWRQAITHQVSQTCAAYFDVHQADWQPERADGLYGFWRDTLQHDHGIGLLMGLPDLGRRLDALPATPLDAEHWALNQLGLPQPVWADYLEAVLLTVNGWASWCAYLGWQAAQEGREDPHLRDLLAIRLAWGAIVQECRDDASTRMAFAALQAEWQQAPSALAEAEAALLVDEVWQLALEAGYQRQLAHRLAGAGALPPVPQDIEVQAAFCIDVRSEPLRRALECVWPAVQTIGFAGFFGLPVAYTPLGTAARRPQLPGLLAPTMEVSDRIDAAQGPDGMPDPAAERAAERARRHRLGASAQVDGASRWPSAAFSYVEVAGVGYLGKLWRWLRPSTEARSRADLTGLPSRYRAVCRPHLHAESVETKAALAARVLRAMGLAEHLAPLVLFVGHGSQTSNNAHAAALDCGACCGQTGEVNARSLALLLNEPPVRAALQAHGITVPEDTVFAAALHNTTTDEIEGFDLDRLPPAARARWDHLQSVLKHASDQVRRERAPSLGLDPRAPHDDLLTQLRRRANDGAQTRPEWGLAGNAAFVIAPRHRTQGVVLDGRSFLHDYDASRDHDGSVLELLMTAPMLVTHWINWQYHASMCDPVHLGSGNKLLHNVVGGSIGVFEGNGGDLRIGLSRQSLHDGQRWIHEPLRLTVLIDAPETAIERVVDKHPIVRQLVDNGWLHLWRFGPQDLQRYAAGQWRPLTSRHATC.

A disordered region spans residues methionine 1–aspartate 32. Residues cysteine 369, aspartate 371, histidine 551, and cysteine 566 each coordinate Zn(2+).

Belongs to the inorganic carbon transporter (TC 9.A.2) DabA family. Forms a complex with DabB. It depends on Zn(2+) as a cofactor.

The protein resides in the cell inner membrane. Functionally, part of an energy-coupled inorganic carbon pump. The chain is Probable inorganic carbon transporter subunit DabA from Ralstonia pickettii (strain 12D).